A 147-amino-acid polypeptide reads, in one-letter code: Small ribosomal subunit protein uS12 (147 aa).

The protein belongs to the universal ribosomal protein uS12 family. As to quaternary structure, part of the 30S ribosomal subunit.

In terms of biological role, with S4 and S5 plays an important role in translational accuracy. Located at the interface of the 30S and 50S subunits. The polypeptide is Small ribosomal subunit protein uS12 (Pyrobaculum islandicum (strain DSM 4184 / JCM 9189 / GEO3)).